Consider the following 232-residue polypeptide: Clarin-2 (232 aa).

Residues 10-30 traverse the membrane as a helical segment; sequence YGLASLLSFSSFILIIVALVV. Asparagine 48 carries N-linked (GlcNAc...) asparagine glycosylation. 3 helical membrane passes run 101–121, 139–159, and 188–208; these read ILLL…FAIL, LWNV…VAAV, and SFWI…VVAI.

The protein belongs to the clarin family.

The protein localises to the cell projection. Its subcellular location is the stereocilium membrane. Functionally, plays a key role to hearing function. Required for normal organization and maintenance of the stereocilia bundle and for mechano-electrical transduction. This chain is Clarin-2, found in Homo sapiens (Human).